The sequence spans 141 residues: Nucleoside diphosphate kinase (141 aa).

Residues lysine 11, phenylalanine 59, arginine 87, threonine 93, arginine 104, and asparagine 114 each coordinate ATP. Catalysis depends on histidine 117, which acts as the Pros-phosphohistidine intermediate.

The protein belongs to the NDK family. As to quaternary structure, homotetramer. Mg(2+) is required as a cofactor.

The protein resides in the cytoplasm. The enzyme catalyses a 2'-deoxyribonucleoside 5'-diphosphate + ATP = a 2'-deoxyribonucleoside 5'-triphosphate + ADP. It catalyses the reaction a ribonucleoside 5'-diphosphate + ATP = a ribonucleoside 5'-triphosphate + ADP. Its function is as follows. Major role in the synthesis of nucleoside triphosphates other than ATP. The ATP gamma phosphate is transferred to the NDP beta phosphate via a ping-pong mechanism, using a phosphorylated active-site intermediate. This is Nucleoside diphosphate kinase from Stenotrophomonas maltophilia (strain R551-3).